A 302-amino-acid chain; its full sequence is tRNA-cytidine(32) 2-sulfurtransferase (302 aa).

The PP-loop motif motif lies at 45-50 (SGGKDS). Residues Cys120, Cys123, and Cys211 each coordinate [4Fe-4S] cluster.

This sequence belongs to the TtcA family. Homodimer. Mg(2+) is required as a cofactor. It depends on [4Fe-4S] cluster as a cofactor.

Its subcellular location is the cytoplasm. It catalyses the reaction cytidine(32) in tRNA + S-sulfanyl-L-cysteinyl-[cysteine desulfurase] + AH2 + ATP = 2-thiocytidine(32) in tRNA + L-cysteinyl-[cysteine desulfurase] + A + AMP + diphosphate + H(+). Its pathway is tRNA modification. Catalyzes the ATP-dependent 2-thiolation of cytidine in position 32 of tRNA, to form 2-thiocytidine (s(2)C32). The sulfur atoms are provided by the cysteine/cysteine desulfurase (IscS) system. The protein is tRNA-cytidine(32) 2-sulfurtransferase of Cellvibrio japonicus (strain Ueda107) (Pseudomonas fluorescens subsp. cellulosa).